A 703-amino-acid polypeptide reads, in one-letter code: Capsid protein VP1 (703 aa).

It belongs to the caliciviridae capsid protein family. As to quaternary structure, homodimer. Homomultimer. Interacts with the minor capsid protein VP2. May bind to VP3 and Vpg proteins. Cleaved by the viral protease to produce mature capsid protein.

It localises to the virion. The protein resides in the host cytoplasm. In terms of biological role, capsid protein self assembles to form an icosahedral capsid with a T=3 symmetry, about 38 nm in diameter, and consisting of 180 capsid proteins. A smaller form of capsid with a diameter of 23 nm might be capsid proteins assembled as icosahedron with T=1 symmetry. The capsid encapsulates the genomic RNA and is decorated with VP2 proteins. This San Miguel sea lion virus serotype 4 (SMSV-4) protein is Capsid protein VP1.